Here is a 295-residue protein sequence, read N- to C-terminus: Putative 23S rRNA (guanine-N(1)-)-methyltransferase (295 aa).

Positions 11, 14, 31, and 35 each coordinate Zn(2+). Residues Y74, 116–117, and H204 each bind S-adenosyl-L-methionine; that span reads TG.

Belongs to the methyltransferase superfamily. RlmA family.

In terms of biological role, confers strong resistance to mycinamicin (MM) and tylosin (TY). May function as methyltransferase. The polypeptide is Putative 23S rRNA (guanine-N(1)-)-methyltransferase (myrA) (Micromonospora griseorubida).